The chain runs to 694 residues: uncharacterized protein (694 aa).

Positions 17-168 (DAFLYVRQSS…GGILNKARRG (152 aa)) constitute a Resolvase/invertase-type recombinase catalytic domain. S25 acts as the O-(5'-phospho-DNA)-serine intermediate in catalysis. Residues 175–316 (PIGLVYTPDA…QAALEQNATG (142 aa)) constitute a DNA-binding region (recombinase). The chain crosses the membrane as a helical span at residues 386–406 (AVSALLLEVMAPAAIDVALAV).

Its subcellular location is the membrane. This is an uncharacterized protein from Sinorhizobium fredii (strain NBRC 101917 / NGR234).